The following is a 92-amino-acid chain: Small ribosomal subunit protein uS19 (92 aa).

The protein belongs to the universal ribosomal protein uS19 family.

Functionally, protein S19 forms a complex with S13 that binds strongly to the 16S ribosomal RNA. In Neisseria meningitidis serogroup C (strain 053442), this protein is Small ribosomal subunit protein uS19.